Consider the following 528-residue polypeptide: Chaperonin GroEL, chloroplastic (528 aa).

ATP contacts are provided by residues 29–32, 86–90, Gly414, and Asp496; these read TLGP and DGTTT.

Belongs to the chaperonin (HSP60) family. As to quaternary structure, forms a cylinder of 14 subunits composed of two heptameric rings stacked back-to-back. Interacts with the co-chaperonin GroES.

Its subcellular location is the plastid. It is found in the chloroplast. It carries out the reaction ATP + H2O + a folded polypeptide = ADP + phosphate + an unfolded polypeptide.. Together with its co-chaperonin GroES, plays an essential role in assisting protein folding. The GroEL-GroES system forms a nano-cage that allows encapsulation of the non-native substrate proteins and provides a physical environment optimized to promote and accelerate protein folding. The sequence is that of Chaperonin GroEL, chloroplastic from Porphyra purpurea (Red seaweed).